The following is a 510-amino-acid chain: Light-independent protochlorophyllide reductase subunit B (510 aa).

Residue aspartate 36 participates in [4Fe-4S] cluster binding. The active-site Proton donor is aspartate 296. 431–432 contributes to the substrate binding site; that stretch reads GM.

Belongs to the ChlB/BchB/BchZ family. In terms of assembly, protochlorophyllide reductase is composed of three subunits; ChlL, ChlN and ChlB. Forms a heterotetramer of two ChlB and two ChlN subunits. It depends on [4Fe-4S] cluster as a cofactor.

The protein resides in the plastid. It is found in the chloroplast. It carries out the reaction chlorophyllide a + oxidized 2[4Fe-4S]-[ferredoxin] + 2 ADP + 2 phosphate = protochlorophyllide a + reduced 2[4Fe-4S]-[ferredoxin] + 2 ATP + 2 H2O. The protein operates within porphyrin-containing compound metabolism; chlorophyll biosynthesis (light-independent). Its function is as follows. Component of the dark-operative protochlorophyllide reductase (DPOR) that uses Mg-ATP and reduced ferredoxin to reduce ring D of protochlorophyllide (Pchlide) to form chlorophyllide a (Chlide). This reaction is light-independent. The NB-protein (ChlN-ChlB) is the catalytic component of the complex. This is Light-independent protochlorophyllide reductase subunit B from Stigeoclonium helveticum (Green alga).